The primary structure comprises 402 residues: MNEFPVVLVINCGSSSIKFSVLDATHCDVLMAGIADGINSEDAFLSVNGGEPAKLAHHSYEGALKAIAFELEKRNLIDSVALIGHRIAHGGNIFTASAIITDEVIENIRRVSPLAPLHNYANLSGIESAQHLFPGVQQVAVFDTSFHQTMAPEAYLYGLPWKYFEELGVRRYGFHGTSHRYVSQRAHDLLALQEEDSGLVVAHLGNGASICAVRNGQSVDTSMGMTPLEGLMMGTRSGDVDFGAMAWIASETNQTLGDMERVVNKESGLLGISGLSSDLRVLEKAWHEGHERAQLAIKTFVHRIARHIAGHAASLHRLDGIIFTGGIGENSVLIRRLVIEHLAVLGVKLDHEMNSLPNSHGERIISSKDTNVICAVIPTNEEKMIALDAIHLGKVNAPVEFA.

Positions 11 and 18 each coordinate ATP. Asn11 is a Mg(2+) binding site. A substrate-binding site is contributed by Arg86. Asp143 (proton donor/acceptor) is an active-site residue. ATP contacts are provided by residues His175, 203-207, 278-280, and 326-330; these read HLGNG, DLR, and GIGEN.

This sequence belongs to the acetokinase family. TdcD subfamily. In terms of assembly, homodimer. It depends on Mg(2+) as a cofactor.

It catalyses the reaction propanoate + ATP = propanoyl phosphate + ADP. It functions in the pathway amino-acid degradation; L-threonine degradation via propanoate pathway; propanoate from L-threonine: step 4/4. In terms of biological role, catalyzes the conversion of propionyl phosphate and ADP to propionate and ATP. This Citrobacter koseri (strain ATCC BAA-895 / CDC 4225-83 / SGSC4696) protein is Propionate kinase.